Consider the following 554-residue polypeptide: Potassium-transporting ATPase potassium-binding subunit (554 aa).

10 consecutive transmembrane segments (helical) span residues methionine 1–alanine 21, proline 60–leucine 80, glycine 131–valine 151, valine 174–isoleucine 194, proline 246–threonine 266, glycine 279–tryptophan 299, glycine 375–glycine 395, phenylalanine 412–methionine 432, isoleucine 481–glycine 501, and glycine 525–leucine 545.

Belongs to the KdpA family. In terms of assembly, the system is composed of three essential subunits: KdpA, KdpB and KdpC.

The protein localises to the cell membrane. In terms of biological role, part of the high-affinity ATP-driven potassium transport (or Kdp) system, which catalyzes the hydrolysis of ATP coupled with the electrogenic transport of potassium into the cytoplasm. This subunit binds the extracellular potassium ions and delivers the ions to the membrane domain of KdpB through an intramembrane tunnel. In Streptomyces avermitilis (strain ATCC 31267 / DSM 46492 / JCM 5070 / NBRC 14893 / NCIMB 12804 / NRRL 8165 / MA-4680), this protein is Potassium-transporting ATPase potassium-binding subunit.